Reading from the N-terminus, the 635-residue chain is Very-long-chain aldehyde decarbonylase GL1-6 (635 aa).

4 helical membrane-spanning segments follow: residues Leu46 to Ile66, Ile100 to Ala120, Gly127 to His147, and Val183 to Ser203. One can recognise a Fatty acid hydroxylase domain in the interval Val139–Thr273.

This sequence belongs to the sterol desaturase family. Homodimer.

The protein localises to the endoplasmic reticulum membrane. It catalyses the reaction a long-chain fatty aldehyde + 2 NADPH + O2 + H(+) = a long-chain alkane + formate + 2 NADP(+) + H2O. Aldehyde decarbonylase involved in the conversion of aldehydes to alkanes. Core component of a very-long-chain alkane synthesis complex. The protein is Very-long-chain aldehyde decarbonylase GL1-6 of Oryza sativa subsp. indica (Rice).